The chain runs to 542 residues: Chaperonin GroEL 2 (542 aa).

ATP is bound by residues 29-32 (TLGP), 86-90 (DGTTT), Gly-413, 477-479 (NAA), and Asp-493.

The protein belongs to the chaperonin (HSP60) family. Forms a cylinder of 14 subunits composed of two heptameric rings stacked back-to-back. Interacts with the co-chaperonin GroES.

It localises to the cytoplasm. It catalyses the reaction ATP + H2O + a folded polypeptide = ADP + phosphate + an unfolded polypeptide.. Functionally, together with its co-chaperonin GroES, plays an essential role in assisting protein folding. The GroEL-GroES system forms a nano-cage that allows encapsulation of the non-native substrate proteins and provides a physical environment optimized to promote and accelerate protein folding. The polypeptide is Chaperonin GroEL 2 (Frankia alni (strain DSM 45986 / CECT 9034 / ACN14a)).